The following is a 552-amino-acid chain: HTH-type transcriptional regulator SgrR (552 aa).

A solute-binding region spans residues 163–493 (ELKPDLAHHW…DDLDTDAQQW (331 aa)).

Functionally, activates the small RNA gene sgrS under glucose-phosphate stress conditions as well as yfdZ. Represses its own transcription under both stress and non-stress conditions. Might act as a sensor of the intracellular accumulation of phosphoglucose by binding these molecules in its C-terminal solute-binding domain. This chain is HTH-type transcriptional regulator SgrR, found in Pectobacterium atrosepticum (strain SCRI 1043 / ATCC BAA-672) (Erwinia carotovora subsp. atroseptica).